We begin with the raw amino-acid sequence, 212 residues long: Protein-L-isoaspartate O-methyltransferase (212 aa).

Ser-60 is an active-site residue.

This sequence belongs to the methyltransferase superfamily. L-isoaspartyl/D-aspartyl protein methyltransferase family.

The protein resides in the cytoplasm. The enzyme catalyses [protein]-L-isoaspartate + S-adenosyl-L-methionine = [protein]-L-isoaspartate alpha-methyl ester + S-adenosyl-L-homocysteine. Its function is as follows. Catalyzes the methyl esterification of L-isoaspartyl residues in peptides and proteins that result from spontaneous decomposition of normal L-aspartyl and L-asparaginyl residues. It plays a role in the repair and/or degradation of damaged proteins. In Methylorubrum populi (strain ATCC BAA-705 / NCIMB 13946 / BJ001) (Methylobacterium populi), this protein is Protein-L-isoaspartate O-methyltransferase.